The sequence spans 378 residues: UPF0754 membrane protein BCE_0952 (378 aa).

2 helical membrane-spanning segments follow: residues 1–21 (MNIW…GGFT) and 357–377 (YLGA…LLFL).

This sequence belongs to the UPF0754 family.

The protein localises to the cell membrane. The polypeptide is UPF0754 membrane protein BCE_0952 (Bacillus cereus (strain ATCC 10987 / NRS 248)).